Reading from the N-terminus, the 238-residue chain is Uracil-DNA glycosylase (238 aa).

The active-site Proton acceptor is Asp-72.

Belongs to the uracil-DNA glycosylase (UDG) superfamily. UNG family.

The protein resides in the cytoplasm. The enzyme catalyses Hydrolyzes single-stranded DNA or mismatched double-stranded DNA and polynucleotides, releasing free uracil.. In terms of biological role, excises uracil residues from the DNA which can arise as a result of misincorporation of dUMP residues by DNA polymerase or due to deamination of cytosine. The protein is Uracil-DNA glycosylase of Chromobacterium violaceum (strain ATCC 12472 / DSM 30191 / JCM 1249 / CCUG 213 / NBRC 12614 / NCIMB 9131 / NCTC 9757 / MK).